Reading from the N-terminus, the 152-residue chain is Small ribosomal subunit protein uS9 (152 aa).

This sequence belongs to the universal ribosomal protein uS9 family.

In Mycobacterium ulcerans (strain Agy99), this protein is Small ribosomal subunit protein uS9.